The sequence spans 129 residues: Small ribosomal subunit protein eS6 (129 aa).

It belongs to the eukaryotic ribosomal protein eS6 family.

This is Small ribosomal subunit protein eS6 from Methanocorpusculum labreanum (strain ATCC 43576 / DSM 4855 / Z).